The primary structure comprises 312 residues: Methionyl-tRNA formyltransferase (312 aa).

109-112 (SLLP) is a (6S)-5,6,7,8-tetrahydrofolate binding site.

The protein belongs to the Fmt family.

The enzyme catalyses L-methionyl-tRNA(fMet) + (6R)-10-formyltetrahydrofolate = N-formyl-L-methionyl-tRNA(fMet) + (6S)-5,6,7,8-tetrahydrofolate + H(+). In terms of biological role, attaches a formyl group to the free amino group of methionyl-tRNA(fMet). The formyl group appears to play a dual role in the initiator identity of N-formylmethionyl-tRNA by promoting its recognition by IF2 and preventing the misappropriation of this tRNA by the elongation apparatus. This chain is Methionyl-tRNA formyltransferase, found in Nitrosospira multiformis (strain ATCC 25196 / NCIMB 11849 / C 71).